Here is a 612-residue protein sequence, read N- to C-terminus: Threonine--tRNA ligase (612 aa).

Residues 218-509 (DHRKLGVELG…LSEHFGGNFP (292 aa)) are catalytic. Residues Cys310, His361, and His486 each coordinate Zn(2+).

Belongs to the class-II aminoacyl-tRNA synthetase family. Homodimer. The cofactor is Zn(2+).

The protein localises to the cytoplasm. It catalyses the reaction tRNA(Thr) + L-threonine + ATP = L-threonyl-tRNA(Thr) + AMP + diphosphate + H(+). Functionally, catalyzes the attachment of threonine to tRNA(Thr) in a two-step reaction: L-threonine is first activated by ATP to form Thr-AMP and then transferred to the acceptor end of tRNA(Thr). Also edits incorrectly charged L-seryl-tRNA(Thr). This is Threonine--tRNA ligase from Helicobacter pylori (strain P12).